We begin with the raw amino-acid sequence, 272 residues long: 3-methyl-2-oxobutanoate hydroxymethyltransferase (272 aa).

Residues Asp-42 and Asp-86 each coordinate Mg(2+). 3-methyl-2-oxobutanoate is bound by residues 42–43, Asp-86, and Lys-116; that span reads DS. A Mg(2+)-binding site is contributed by Glu-118. The Proton acceptor role is filled by Glu-185. Residues 251–272 are disordered; sequence LKEQRDQRATPTTPPPPPAPDC. Residues 262–272 show a composition bias toward pro residues; sequence TTPPPPPAPDC.

The protein belongs to the PanB family. In terms of assembly, homodecamer; pentamer of dimers. Requires Mg(2+) as cofactor.

It localises to the cytoplasm. The catalysed reaction is 3-methyl-2-oxobutanoate + (6R)-5,10-methylene-5,6,7,8-tetrahydrofolate + H2O = 2-dehydropantoate + (6S)-5,6,7,8-tetrahydrofolate. The protein operates within cofactor biosynthesis; (R)-pantothenate biosynthesis; (R)-pantoate from 3-methyl-2-oxobutanoate: step 1/2. In terms of biological role, catalyzes the reversible reaction in which hydroxymethyl group from 5,10-methylenetetrahydrofolate is transferred onto alpha-ketoisovalerate to form ketopantoate. In Synechococcus sp. (strain CC9311), this protein is 3-methyl-2-oxobutanoate hydroxymethyltransferase.